The following is a 465-amino-acid chain: Ribulose bisphosphate carboxylase large chain (465 aa).

Lys-4 is subject to N6,N6,N6-trimethyllysine. The substrate site is built by Asn-113 and Thr-163. The Proton acceptor role is filled by Lys-165. Residue Lys-167 participates in substrate binding. Mg(2+) contacts are provided by Lys-191, Asp-193, and Glu-194. Lys-191 bears the N6-carboxylysine mark. His-284 (proton acceptor) is an active-site residue. Substrate is bound by residues Arg-285, His-317, and Ser-369.

This sequence belongs to the RuBisCO large chain family. Type I subfamily. As to quaternary structure, heterohexadecamer of 8 large chains and 8 small chains; disulfide-linked. The disulfide link is formed within the large subunit homodimers. The cofactor is Mg(2+). Post-translationally, the disulfide bond which can form in the large chain dimeric partners within the hexadecamer appears to be associated with oxidative stress and protein turnover.

The protein resides in the plastid. The protein localises to the chloroplast. It catalyses the reaction 2 (2R)-3-phosphoglycerate + 2 H(+) = D-ribulose 1,5-bisphosphate + CO2 + H2O. It carries out the reaction D-ribulose 1,5-bisphosphate + O2 = 2-phosphoglycolate + (2R)-3-phosphoglycerate + 2 H(+). Functionally, ruBisCO catalyzes two reactions: the carboxylation of D-ribulose 1,5-bisphosphate, the primary event in carbon dioxide fixation, as well as the oxidative fragmentation of the pentose substrate in the photorespiration process. Both reactions occur simultaneously and in competition at the same active site. The sequence is that of Ribulose bisphosphate carboxylase large chain from Combretum indicum (Rangoon creeper).